Consider the following 201-residue polypeptide: Adenylyl-sulfate kinase (201 aa).

Position 35 to 42 (35 to 42 (GLSGSGKS)) interacts with ATP. Residue S109 is the Phosphoserine intermediate of the active site.

The protein belongs to the APS kinase family.

The catalysed reaction is adenosine 5'-phosphosulfate + ATP = 3'-phosphoadenylyl sulfate + ADP + H(+). It participates in sulfur metabolism; hydrogen sulfide biosynthesis; sulfite from sulfate: step 2/3. Catalyzes the synthesis of activated sulfate. The sequence is that of Adenylyl-sulfate kinase from Salmonella paratyphi A (strain AKU_12601).